The following is a 335-amino-acid chain: GTPase Obg (335 aa).

The 159-residue stretch at 1 to 159 (MKFVDSAKIS…YELEMELKLM (159 aa)) folds into the Obg domain. The OBG-type G domain maps to 160-323 (ADVGLVGFPN…LKDELWRQVS (164 aa)). GTP contacts are provided by residues 166–173 (GFPNAGKS), 191–195 (FTTLV), 213–216 (DIPG), 280–283 (TKMD), and 304–306 (SSV). Mg(2+) contacts are provided by Ser-173 and Thr-193.

Belongs to the TRAFAC class OBG-HflX-like GTPase superfamily. OBG GTPase family. In terms of assembly, monomer. The cofactor is Mg(2+).

The protein resides in the cytoplasm. Its function is as follows. An essential GTPase which binds GTP, GDP and possibly (p)ppGpp with moderate affinity, with high nucleotide exchange rates and a fairly low GTP hydrolysis rate. Plays a role in control of the cell cycle, stress response, ribosome biogenesis and in those bacteria that undergo differentiation, in morphogenesis control. This chain is GTPase Obg, found in Chlorobaculum tepidum (strain ATCC 49652 / DSM 12025 / NBRC 103806 / TLS) (Chlorobium tepidum).